The chain runs to 312 residues: Protease HtpX homolog (312 aa).

Helical transmembrane passes span 6 to 26 and 28 to 48; these read TAVL…AIGG and GGMM…YWYA. His130 provides a ligand contact to Zn(2+). Residue Glu131 is part of the active site. Residue His134 coordinates Zn(2+). 2 helical membrane-spanning segments follow: residues 145 to 165 and 173 to 193; these read ITAS…FFGG and PFGG…AMVV. Glu202 contacts Zn(2+). Low complexity predominate over residues 287 to 297; it reads PAPARAAPARG. Residues 287 to 312 form a disordered region; that stretch reads PAPARAAPARGPWGGNTGGTRRGPWG. Residues 298 to 312 show a composition bias toward gly residues; sequence PWGGNTGGTRRGPWG.

This sequence belongs to the peptidase M48B family. Requires Zn(2+) as cofactor.

It localises to the cell inner membrane. The polypeptide is Protease HtpX homolog (Azorhizobium caulinodans (strain ATCC 43989 / DSM 5975 / JCM 20966 / LMG 6465 / NBRC 14845 / NCIMB 13405 / ORS 571)).